A 345-amino-acid polypeptide reads, in one-letter code: NADH-quinone oxidoreductase subunit H (345 aa).

8 helical membrane passes run 13 to 33 (VLIIAQCLAVLGFVMVSLLFL), 84 to 104 (FMLAPMTSFVLAMIAWAVIPF), 115 to 135 (VAILYVFAVSSLEVYGVIMGG), 161 to 181 (IGLIIIGVILSTGSMNFSAIV), 190 to 210 (FFSWYWLPHLPMVFLFFISAL), 248 to 268 (YIAIFLMCALITLLFFGGWLS), 278 to 298 (IWMVGKMAFFFFLFAMVKAIV), and 309 to 329 (LGWKVFLPFSLAWVVFVAFAA).

It belongs to the complex I subunit 1 family. NDH-1 is composed of 14 different subunits. Subunits NuoA, H, J, K, L, M, N constitute the membrane sector of the complex.

The protein resides in the cell inner membrane. It carries out the reaction a quinone + NADH + 5 H(+)(in) = a quinol + NAD(+) + 4 H(+)(out). Functionally, NDH-1 shuttles electrons from NADH, via FMN and iron-sulfur (Fe-S) centers, to quinones in the respiratory chain. The immediate electron acceptor for the enzyme in this species is believed to be ubiquinone. Couples the redox reaction to proton translocation (for every two electrons transferred, four hydrogen ions are translocated across the cytoplasmic membrane), and thus conserves the redox energy in a proton gradient. This subunit may bind ubiquinone. The polypeptide is NADH-quinone oxidoreductase subunit H (Dinoroseobacter shibae (strain DSM 16493 / NCIMB 14021 / DFL 12)).